The chain runs to 120 residues: Ribosome-binding factor A (120 aa).

The protein belongs to the RbfA family. In terms of assembly, monomer. Binds 30S ribosomal subunits, but not 50S ribosomal subunits or 70S ribosomes.

Its subcellular location is the cytoplasm. One of several proteins that assist in the late maturation steps of the functional core of the 30S ribosomal subunit. Associates with free 30S ribosomal subunits (but not with 30S subunits that are part of 70S ribosomes or polysomes). Required for efficient processing of 16S rRNA. May interact with the 5'-terminal helix region of 16S rRNA. The protein is Ribosome-binding factor A of Limosilactobacillus fermentum (strain NBRC 3956 / LMG 18251) (Lactobacillus fermentum).